Consider the following 162-residue polypeptide: MPDSIKKELTRPYGFLFTNNDIFINFILEKKNNRLITVGDVVTSTLYDRNIIPFLSIIDGKTKRQIKVKTVNENVIKVKNEKSTIRFSVMKIIKNLLDKNERATILVDGEEDLLVIPVVIFGRNNDIIVYGQPNAGAVVIINNHFVKIRVKQILEKFYVKKC.

Asp-40, Val-41, Val-42, Asp-59, Lys-61, and Glu-111 together coordinate GTP.

It belongs to the GTP-dependent DPCK family.

It catalyses the reaction 3'-dephospho-CoA + GTP = GDP + CoA + H(+). Its pathway is cofactor biosynthesis; coenzyme A biosynthesis. In terms of biological role, catalyzes the GTP-dependent phosphorylation of the 3'-hydroxyl group of dephosphocoenzyme A to form coenzyme A (CoA). The protein is GTP-dependent dephospho-CoA kinase of Sulfurisphaera tokodaii (strain DSM 16993 / JCM 10545 / NBRC 100140 / 7) (Sulfolobus tokodaii).